The following is a 180-amino-acid chain: NAD(P)H-quinone oxidoreductase subunit I, chloroplastic (180 aa).

4Fe-4S ferredoxin-type domains lie at 55–84 (GRIH…VDWR) and 95–124 (LNYS…MTEE). [4Fe-4S] cluster-binding residues include Cys64, Cys67, Cys70, Cys74, Cys104, Cys107, Cys110, and Cys114.

Belongs to the complex I 23 kDa subunit family. In terms of assembly, NDH is composed of at least 16 different subunits, 5 of which are encoded in the nucleus. Requires [4Fe-4S] cluster as cofactor.

The protein resides in the plastid. It localises to the chloroplast thylakoid membrane. It catalyses the reaction a plastoquinone + NADH + (n+1) H(+)(in) = a plastoquinol + NAD(+) + n H(+)(out). It carries out the reaction a plastoquinone + NADPH + (n+1) H(+)(in) = a plastoquinol + NADP(+) + n H(+)(out). In terms of biological role, NDH shuttles electrons from NAD(P)H:plastoquinone, via FMN and iron-sulfur (Fe-S) centers, to quinones in the photosynthetic chain and possibly in a chloroplast respiratory chain. The immediate electron acceptor for the enzyme in this species is believed to be plastoquinone. Couples the redox reaction to proton translocation, and thus conserves the redox energy in a proton gradient. This is NAD(P)H-quinone oxidoreductase subunit I, chloroplastic from Zea mays (Maize).